The primary structure comprises 304 residues: Zinc carboxypeptidase (304 aa).

The Peptidase M14 domain occupies 1–294 (QYHTLPEIYS…DSVVTILKES (294 aa)). The Zn(2+) site is built by histidine 58 and glutamate 61. Residues cysteine 125 and cysteine 148 are joined by a disulfide bond. Residue histidine 184 coordinates Zn(2+). Glutamate 259 serves as the catalytic Proton donor/acceptor.

This sequence belongs to the peptidase M14 family. Zn(2+) serves as cofactor. Gut specific.

Its subcellular location is the secreted. Involved in the digestion of the blood meal. The sequence is that of Zinc carboxypeptidase from Simulium vittatum (Striped black fly).